We begin with the raw amino-acid sequence, 498 residues long: Hexokinase-3 (498 aa).

The helical transmembrane segment at 4–24 (VAVAFAAVAVVAACSVAAVMV) threads the bilayer. The 460-residue stretch at 35 to 494 (RTVVEILKEL…SSIGSALLVA (460 aa)) folds into the Hexokinase domain. The interval 90 to 227 (TGREKGTYYA…GLDMHVAALV (138 aa)) is hexokinase small subdomain. ADP-binding residues include Gly104 and Thr105. D-glucose is bound by residues Thr193, Lys194, Asn228, and Asp229. Residues 228–483 (NDTVGALSLG…QYVVVKAMED (256 aa)) are hexokinase large subdomain. Thr252 contributes to the ADP binding site. Residues Asn255, Glu283, and Glu314 each contribute to the D-glucose site. Gly448 contacts ADP.

The protein belongs to the hexokinase family. As to expression, expressed in roots, emerging lateral roots, vascular tissues of cotyledons, roots and leaves, root and shoot meristems, anther filaments and funiculi of mature seeds.

The protein resides in the mitochondrion outer membrane. It catalyses the reaction a D-hexose + ATP = a D-hexose 6-phosphate + ADP + H(+). The catalysed reaction is D-fructose + ATP = D-fructose 6-phosphate + ADP + H(+). The enzyme catalyses D-glucose + ATP = D-glucose 6-phosphate + ADP + H(+). It participates in carbohydrate metabolism; hexose metabolism. It functions in the pathway carbohydrate degradation; glycolysis; D-glyceraldehyde 3-phosphate and glycerone phosphate from D-glucose: step 1/4. Functionally, fructose and glucose phosphorylating enzyme. May be involved in the phosphorylation of glucose during the export from mitochondrion to cytosol. Plays a role in plant growth and development, perhaps by mediating cross-talk between glucose and hormone response pathways. Involved in root hair cell development by mediating certain aspects of cross talk between glucose and ethylene response pathways. This chain is Hexokinase-3, found in Arabidopsis thaliana (Mouse-ear cress).